Reading from the N-terminus, the 348-residue chain is NADH-cytochrome b5 reductase 2 (348 aa).

Residues 41–61 (TLLYGAAAAAVAGAGYYFLGG) form a helical membrane-spanning segment. The region spanning 97–202 (QGWVSLKLEE…KGPLPKYPWT (106 aa)) is the FAD-binding FR-type domain. 205-240 (KHGHIALVAGGTGITPMFQLCRAIFNNPDDQTKVTL) is an FAD binding site.

The protein belongs to the flavoprotein pyridine nucleotide cytochrome reductase family. The cofactor is FAD.

It localises to the mitochondrion outer membrane. It carries out the reaction 2 Fe(III)-[cytochrome b5] + NADH = 2 Fe(II)-[cytochrome b5] + NAD(+) + H(+). Its function is as follows. May mediate the reduction of outer membrane cytochrome b5. The polypeptide is NADH-cytochrome b5 reductase 2 (MCR1) (Chaetomium globosum (strain ATCC 6205 / CBS 148.51 / DSM 1962 / NBRC 6347 / NRRL 1970) (Soil fungus)).